The sequence spans 302 residues: Phosphoribosylaminoimidazole-succinocarboxamide synthase (302 aa).

The protein belongs to the SAICAR synthetase family.

The catalysed reaction is 5-amino-1-(5-phospho-D-ribosyl)imidazole-4-carboxylate + L-aspartate + ATP = (2S)-2-[5-amino-1-(5-phospho-beta-D-ribosyl)imidazole-4-carboxamido]succinate + ADP + phosphate + 2 H(+). It functions in the pathway purine metabolism; IMP biosynthesis via de novo pathway; 5-amino-1-(5-phospho-D-ribosyl)imidazole-4-carboxamide from 5-amino-1-(5-phospho-D-ribosyl)imidazole-4-carboxylate: step 1/2. In Cupriavidus metallidurans (strain ATCC 43123 / DSM 2839 / NBRC 102507 / CH34) (Ralstonia metallidurans), this protein is Phosphoribosylaminoimidazole-succinocarboxamide synthase.